Consider the following 89-residue polypeptide: Small ribosomal subunit protein uS15 (89 aa).

The protein belongs to the universal ribosomal protein uS15 family. As to quaternary structure, part of the 30S ribosomal subunit. Forms a bridge to the 50S subunit in the 70S ribosome, contacting the 23S rRNA.

Its function is as follows. One of the primary rRNA binding proteins, it binds directly to 16S rRNA where it helps nucleate assembly of the platform of the 30S subunit by binding and bridging several RNA helices of the 16S rRNA. Forms an intersubunit bridge (bridge B4) with the 23S rRNA of the 50S subunit in the ribosome. In Synechocystis sp. (strain ATCC 27184 / PCC 6803 / Kazusa), this protein is Small ribosomal subunit protein uS15.